Consider the following 306-residue polypeptide: UDP-N-acetylenolpyruvoylglucosamine reductase (306 aa).

Residues 33–197 (TGGEADFYLS…LEAAFTLEPG (165 aa)) form the FAD-binding PCMH-type domain. The active site involves Arg176. The active-site Proton donor is Ser226. Residue Glu296 is part of the active site.

Belongs to the MurB family. Requires FAD as cofactor.

The protein resides in the cytoplasm. It carries out the reaction UDP-N-acetyl-alpha-D-muramate + NADP(+) = UDP-N-acetyl-3-O-(1-carboxyvinyl)-alpha-D-glucosamine + NADPH + H(+). It functions in the pathway cell wall biogenesis; peptidoglycan biosynthesis. Functionally, cell wall formation. The protein is UDP-N-acetylenolpyruvoylglucosamine reductase of Staphylococcus epidermidis (strain ATCC 35984 / DSM 28319 / BCRC 17069 / CCUG 31568 / BM 3577 / RP62A).